The sequence spans 249 residues: MRWVSMRVIKVGGSVLENLEKVFKPEIFRDAVVVHGGSRYVDELAKKLGLNVEKLTSPSGVTFRRTTRKVLDVYIAAVMKANRELVSFLRRQGIEAIGVSGVKEVIIGRRKKLIKAVINGKIMAIRDDYSGIIKEVNVEMIRNYMKVGVPVIAPIAYDPVENVPLNVDGDKVAYHVALALKSRELYFLSDTAFLINGEVIDKIPRNRIEEYFPYSSGGMRKKLLMAKKAIESGVERVIIEGLNGRTVIS.

The substrate site is built by Arg-64 and Asn-166.

The protein belongs to the acetylglutamate kinase family. LysZ subfamily.

Its subcellular location is the cytoplasm. It catalyses the reaction [amino-group carrier protein]-C-terminal-N-(1,4-dicarboxybutan-1-yl)-L-glutamine + ATP = [amino-group carrier protein]-C-terminal-N-(1-carboxy-5-phosphooxy-5-oxopentan-1-yl)-L-glutamine + ADP. The catalysed reaction is [amino-group carrier protein]-C-terminal-gamma-(L-glutamyl)-L-glutamate + ATP = [amino-group carrier protein]-C-terminal-gamma-(5-phospho-L-glutamyl)-L-glutamate + ADP. It functions in the pathway amino-acid biosynthesis; L-lysine biosynthesis via AAA pathway; L-lysine from L-alpha-aminoadipate (Thermus route): step 2/5. Its pathway is amino-acid biosynthesis; L-arginine biosynthesis. In terms of biological role, involved in both the arginine and lysine biosynthetic pathways. Phosphorylates the LysW-bound precursors glutamate (for arginine biosynthesis), respectively alpha-aminoadipate (for lysine biosynthesis). The polypeptide is Putative [LysW]-aminoadipate/[LysW]-glutamate kinase (Pyrococcus horikoshii (strain ATCC 700860 / DSM 12428 / JCM 9974 / NBRC 100139 / OT-3)).